A 171-amino-acid polypeptide reads, in one-letter code: Co-chaperone protein HscB homolog (171 aa).

Residues 2 to 74 (NHFELFGLPS…ISRAEYILAE (73 aa)) form the J domain.

The protein belongs to the HscB family. Interacts with HscA and stimulates its ATPase activity.

In terms of biological role, co-chaperone involved in the maturation of iron-sulfur cluster-containing proteins. Seems to help targeting proteins to be folded toward HscA. The polypeptide is Co-chaperone protein HscB homolog (Vibrio parahaemolyticus serotype O3:K6 (strain RIMD 2210633)).